Consider the following 594-residue polypeptide: MRVSRLMLVTLRDVPADAEIPSHQLLVRGGYIRRIGSGIYAYLPMMWKVLRKINAIVRAELNHLGALETLLPQLQPADLWERSGRWQGYTEGEGIMFHLEDRQNRQLGLGPTHEEVITELAGDLLRSYRQLPVTLYQIQTKFRDEIRPRFGLMRGREFIMKDAYSFHANQEDLENTYQAMATAYARIFERCGLEAVAVDADSGAIGGAASQEYMVTAAAGEDLILTSSDGLYAANQEKATSRPPVALPLAAGEERMIETPDQSSIEQLCAANGLDPTQTVKVLVLLARLDDGREQPTLVSLRGDQDLNEVKLANAVSRSLNAAVLEIRPISENQLCQQDLSEFPFGAIGPDLSDTALKGCRSWENHFLRLADATALDLPRFVCGANSKDQHCWGRTWDAMPAQIKADLRTARAGDQCVHDPSQTLSECRGIEVGHIFQLGRKYSEALDARFTNSAGQQEALLMGCYGIGISRLAQAAVEQHHDEAGISWPLGIAPFQVIVVIAKIQDPTQVALAEELYQSFLDAGIDALLDDRDERAGVKFKDADLIGIPWRIVVGRDAGEGKVEVVERSTRCSTSVPHQEAFQQVKDSISTHL.

Belongs to the class-II aminoacyl-tRNA synthetase family. ProS type 1 subfamily. Homodimer.

The protein resides in the cytoplasm. It carries out the reaction tRNA(Pro) + L-proline + ATP = L-prolyl-tRNA(Pro) + AMP + diphosphate. Its function is as follows. Catalyzes the attachment of proline to tRNA(Pro) in a two-step reaction: proline is first activated by ATP to form Pro-AMP and then transferred to the acceptor end of tRNA(Pro). As ProRS can inadvertently accommodate and process non-cognate amino acids such as alanine and cysteine, to avoid such errors it has two additional distinct editing activities against alanine. One activity is designated as 'pretransfer' editing and involves the tRNA(Pro)-independent hydrolysis of activated Ala-AMP. The other activity is designated 'posttransfer' editing and involves deacylation of mischarged Ala-tRNA(Pro). The misacylated Cys-tRNA(Pro) is not edited by ProRS. The polypeptide is Proline--tRNA ligase (Synechococcus sp. (strain WH7803)).